The following is a 536-amino-acid chain: MTLLALKEDRPTPKAVYNWRVYTCAAIASFASCMIGYDSSFIGTTLALPSFTKEFDFASYTPGALALLQSNIVSVYQAGAFFGSLFAFATSYFLGRRRSLIAFSVVFIIGAAIMLAADGQRRGVDPIIAGRVLAGIGVGGASNMVPIYISELAPPAVRGRLVGIYELGWQIGGLVGFWINYGVNTTMAPTRSQWLIPFAVQLIPAGLLFLGSFWIPESPRWLFANGRREEAIKVLCWIRNLEPTDRYIVEEISYIDADLQRYAREVGKGFWKPFLSLKQPKVRWRFFLGGMLFLWQNGSGINAINYYSPTVFRSIGITGTNTGFLTTGIFGVVKMVLTIIWLLWLVDLVGRRRILFVGATGGSLCMWFIGAYIKIAGPGTTKTEEAKLTSGGIAAIFFFYLWTAFYTPSWNGTPWVINSEMFDQNTRSLGQASAAANNWFWNFIISRFTPQMFIKMEYGVYFFFASLMLLSVVFIYFFIPETKSIPLEAMDRLFAIKSVHNANKILMDELNFDRNPEREQSSLDEKDRVTQTENAV.

The Cytoplasmic portion of the chain corresponds to 1-26 (MTLLALKEDRPTPKAVYNWRVYTCAA). Residues 27–47 (IASFASCMIGYDSSFIGTTLA) traverse the membrane as a helical segment. The Extracellular segment spans residues 48–74 (LPSFTKEFDFASYTPGALALLQSNIVS). The helical transmembrane segment at 75-95 (VYQAGAFFGSLFAFATSYFLG) threads the bilayer. Residues 96-98 (RRR) are Cytoplasmic-facing. The helical transmembrane segment at 99–119 (SLIAFSVVFIIGAAIMLAADG) threads the bilayer. Residues 120 to 131 (QRRGVDPIIAGR) lie on the Extracellular side of the membrane. A helical membrane pass occupies residues 132-152 (VLAGIGVGGASNMVPIYISEL). Topologically, residues 153 to 160 (APPAVRGR) are cytoplasmic. A helical membrane pass occupies residues 161-181 (LVGIYELGWQIGGLVGFWINY). Topologically, residues 182–195 (GVNTTMAPTRSQWL) are extracellular. N-linked (GlcNAc...) asparagine glycosylation is present at Asn-184. The chain crosses the membrane as a helical span at residues 196-216 (IPFAVQLIPAGLLFLGSFWIP). Over 217-285 (ESPRWLFANG…SLKQPKVRWR (69 aa)) the chain is Cytoplasmic. Residues 286–306 (FFLGGMLFLWQNGSGINAINY) form a helical membrane-spanning segment. Over 307–327 (YSPTVFRSIGITGTNTGFLTT) the chain is Extracellular. The helical transmembrane segment at 328-349 (GIFGVVKMVLTIIWLLWLVDLV) threads the bilayer. At 350–352 (GRR) the chain is on the cytoplasmic side. Residues 353-373 (RILFVGATGGSLCMWFIGAYI) traverse the membrane as a helical segment. Topologically, residues 374–389 (KIAGPGTTKTEEAKLT) are extracellular. The helical transmembrane segment at 390–410 (SGGIAAIFFFYLWTAFYTPSW) threads the bilayer. The Cytoplasmic portion of the chain corresponds to 411–435 (NGTPWVINSEMFDQNTRSLGQASAA). The chain crosses the membrane as a helical span at residues 436 to 456 (ANNWFWNFIISRFTPQMFIKM). Residues 457–458 (EY) are Extracellular-facing. The helical transmembrane segment at 459 to 479 (GVYFFFASLMLLSVVFIYFFI) threads the bilayer. Over 480-536 (PETKSIPLEAMDRLFAIKSVHNANKILMDELNFDRNPEREQSSLDEKDRVTQTENAV) the chain is Cytoplasmic. The segment covering 516 to 530 (PEREQSSLDEKDRVT) has biased composition (basic and acidic residues). The segment at 516–536 (PEREQSSLDEKDRVTQTENAV) is disordered.

It belongs to the major facilitator superfamily. Sugar transporter (TC 2.A.1.1) family.

Its subcellular location is the membrane. This is Quinate permease (qa-y) from Neurospora africana.